The primary structure comprises 314 residues: Melanoma-associated antigen 12 (314 aa).

Basic and acidic residues predominate over residues 1–14 (MPLEQRSQHCKPEE). The tract at residues 1–72 (MPLEQRSQHC…HSPQGASTLP (72 aa)) is disordered. The segment covering 17 to 44 (EAQGEALGLVGAQAPATEEQETASSSST) has biased composition (low complexity). Residues 109 to 308 (LSRKMAELVH…ISYPPLHEWA (200 aa)) form the MAGE domain.

As to expression, expressed in many tumors of several types, such as melanoma, head and neck squamous cell carcinoma, lung carcinoma and breast carcinoma, but not in normal tissues except for testes.

In terms of biological role, not known, though may play a role tumor transformation or progression. In vitro promotes cell viability in melanoma cell lines. The polypeptide is Melanoma-associated antigen 12 (MAGEA12) (Homo sapiens (Human)).